The chain runs to 264 residues: Exodeoxyribonuclease YycJ (264 aa).

Residues H58, H60, D62, H63, and D145 each coordinate a divalent metal cation.

This sequence belongs to the metallo-beta-lactamase superfamily. Requires Fe(2+) as cofactor. The cofactor is Zn(2+). Mn(2+) serves as cofactor.

5'-&gt;3' double-stranded DNA exonuclease. May play a role in mutation mismatch repair (MMR). Required for accurate coordination of cell division with DNA replication. May play a role in cell wall metabolism. The sequence is that of Exodeoxyribonuclease YycJ from Bacillus anthracis.